The sequence spans 317 residues: Lipopolysaccharide heptosyltransferase 1 (317 aa).

Residues Thr-187, Thr-188, Lys-192, Glu-222, Met-242, Asp-261, Thr-262, Gly-263, and His-266 each contribute to the ADP-L-glycero-beta-D-manno-heptose site.

This sequence belongs to the glycosyltransferase 9 family.

The protein localises to the cell inner membrane. It catalyses the reaction an alpha-Kdo-(2-&gt;4)-alpha-Kdo-(2-&gt;6)-lipid A + ADP-L-glycero-beta-D-manno-heptose = an L-alpha-D-Hep-(1-&gt;5)-[alpha-Kdo-(2-&gt;4)]-alpha-Kdo-(2-&gt;6)-lipid A + ADP + H(+). The protein operates within bacterial outer membrane biogenesis; LPS core biosynthesis. Functionally, glycosyltransferase involved in the biosynthesis of the core oligosaccharide region of lipopolysaccharide (LPS). Catalyzes the addition of the first heptose unit to one 3-deoxy-D-manno-octulosonic acid (Kdo) residue of the Kdo2-lipid A module. This chain is Lipopolysaccharide heptosyltransferase 1, found in Salmonella typhimurium (strain LT2 / SGSC1412 / ATCC 700720).